Here is a 163-residue protein sequence, read N- to C-terminus: Nuclear cap-binding protein subunit 2 (163 aa).

Residues Tyr-18, Tyr-41, Arg-110–Asp-114, Arg-121–Arg-125, and Gln-131–Val-132 contribute to the mRNA site. The 79-residue stretch at Ser-38 to Gly-116 folds into the RRM domain.

This sequence belongs to the RRM NCBP2 family. Component of the nuclear cap-binding complex (CBC), a heterodimer composed of Cbp80 and Cbp20 that interacts with m7GpppG-capped RNA.

It localises to the nucleus. Functionally, component of the cap-binding complex (CBC), which binds co-transcriptionally to the 5' cap of pre-mRNAs and is involved in various processes such as pre-mRNA splicing and RNA-mediated gene silencing (RNAi). The CBC complex is involved in miRNA-mediated RNA interference and is required for primary microRNAs (miRNAs) processing. Also involved in innate immunity via the short interfering RNAs (siRNAs) processing machinery by restricting the viral RNA production. In the CBC complex, Cbp20 recognizes and binds capped RNAs (m7GpppG-capped RNA) but requires Cbp80 to stabilize the movement of its N-terminal loop and lock the CBC into a high affinity cap-binding state with the cap structure. This Anopheles gambiae (African malaria mosquito) protein is Nuclear cap-binding protein subunit 2 (Cbp20).